Consider the following 437-residue polypeptide: Transcription factor AP-2-alpha (437 aa).

Residue Lys-10 forms a Glycyl lysine isopeptide (Lys-Gly) (interchain with G-Cter in SUMO); alternate linkage. Lys-10 participates in a covalent cross-link: Glycyl lysine isopeptide (Lys-Gly) (interchain with G-Cter in SUMO2); alternate. Residues 14–107 (CEDRHDGTSN…GQRQSQESGL (94 aa)) are disordered. The PPxY motif motif lies at 57–62 (YFPPPY). Composition is skewed to low complexity over residues 65 to 74 (IYPQSQDPYS) and 88 to 101 (QPQP…GQRQ). Residues Lys-177 and Lys-184 each participate in a glycyl lysine isopeptide (Lys-Gly) (interchain with G-Cter in SUMO2) cross-link. Residue Ser-239 is modified to Phosphoserine; by PKA. The tract at residues 280 to 410 (RRKAANVTLL…YLTEALKAMD (131 aa)) is H-S-H (helix-span-helix), dimerization. The segment covering 414-427 (LSNNPNSHTDNSAK) has biased composition (polar residues). Residues 414–437 (LSNNPNSHTDNSAKSSDKEEKHRK) are disordered. Residues 428-437 (SSDKEEKHRK) are compositionally biased toward basic and acidic residues.

Belongs to the AP-2 family. In terms of assembly, binds DNA as a dimer. Can form homodimers or heterodimers with other AP-2 family members. Interacts with WWOX. Interacts with UBE2I. Interacts with RALBP1 in a complex also containing EPN1 and NUMB during interphase and mitosis. Interacts with CITED4. Interacts with KCTD1; this interaction represses transcription activation. Interacts (via C-terminus) with CITED2 (via C-terminus); the interaction stimulates TFAP2A-transcriptional activation. Interacts (via N-terminus) with EP300 (via N-terminus); the interaction requires CITED2. Interacts with KCTD15; this interaction inhibits TFAP2A transcriptional activation. Post-translationally, sumoylated on Lys-10; which inhibits transcriptional activity.

The protein localises to the nucleus. In terms of biological role, sequence-specific DNA-binding protein that interacts with inducible viral and cellular enhancer elements to regulate transcription of selected genes. AP-2 factors bind to the consensus sequence 5'-GCCNNNGGC-3' and activate genes involved in a large spectrum of important biological functions including proper eye, face, body wall, limb and neural tube development. They also suppress a number of genes including MCAM/MUC18, C/EBP alpha and MYC. AP-2-alpha is the only AP-2 protein required for early morphogenesis of the lens vesicle. Together with the CITED2 coactivator, stimulates the PITX2 P1 promoter transcription activation. Associates with chromatin to the PITX2 P1 promoter region. The polypeptide is Transcription factor AP-2-alpha (Tfap2a) (Mus musculus (Mouse)).